The sequence spans 904 residues: Mdm2-binding protein (904 aa).

The disordered stretch occupies residues Ala19–Gln38. An interaction with MDM2 region spans residues Met521–Lys904. Residues Ser597, Ser639, Ser703, and Ser707 each carry the phosphoserine modification. Disordered regions lie at residues Glu754–Ser784 and Pro800–His830. The span at Ser812–His830 shows a compositional bias: basic and acidic residues.

This sequence belongs to the MTBP family. As to quaternary structure, interacts with MDM2.

Inhibits cell migration in vitro and suppresses the invasive behavior of tumor cells. May play a role in MDM2-dependent p53/TP53 homeostasis in unstressed cells. Inhibits autoubiquitination of MDM2, thereby enhancing MDM2 stability. This promotes MDM2-mediated ubiquitination of p53/TP53 and its subsequent degradation. The protein is Mdm2-binding protein (MTBP) of Homo sapiens (Human).